The chain runs to 156 residues: Oleosin Zm-I (156 aa).

Positions 1–30 (MADHHRGATGGGGGYGDLQRGGGMHGEAQQ) are disordered. Alanine 2 is modified (N-acetylalanine). The polar stretch occupies residues 2-42 (ADHHRGATGGGGGYGDLQRGGGMHGEAQQQQKQGAMMTALK). A compositionally biased stretch (gly residues) spans 8 to 25 (ATGGGGGYGDLQRGGGMH). The interval 43–114 (AATAATFGGS…AALSVFSWMY (72 aa)) is hydrophobic. Transmembrane regions (helical) follow at residues 51 to 71 (GSML…LTVA) and 95 to 115 (GFVT…WMYK).

This sequence belongs to the oleosin family. In terms of processing, the N-terminus is blocked.

It is found in the lipid droplet. It localises to the membrane. In terms of biological role, may have a structural role to stabilize the lipid body during desiccation of the seed by preventing coalescence of the oil. Probably interacts with both lipid and phospholipid moieties of lipid bodies. May also provide recognition signals for specific lipase anchorage in lipolysis during seedling growth. This is Oleosin Zm-I (OLE16) from Zea mays (Maize).